A 459-amino-acid chain; its full sequence is ATP synthase subunit beta 1 (459 aa).

148–155 (GGAGVGKT) is a binding site for ATP.

The protein belongs to the ATPase alpha/beta chains family. In terms of assembly, F-type ATPases have 2 components, CF(1) - the catalytic core - and CF(0) - the membrane proton channel. CF(1) has five subunits: alpha(3), beta(3), gamma(1), delta(1), epsilon(1). CF(0) has three main subunits: a(1), b(2) and c(9-12). The alpha and beta chains form an alternating ring which encloses part of the gamma chain. CF(1) is attached to CF(0) by a central stalk formed by the gamma and epsilon chains, while a peripheral stalk is formed by the delta and b chains.

It localises to the cell inner membrane. It catalyses the reaction ATP + H2O + 4 H(+)(in) = ADP + phosphate + 5 H(+)(out). Functionally, produces ATP from ADP in the presence of a proton gradient across the membrane. The catalytic sites are hosted primarily by the beta subunits. This Nitrosospira multiformis (strain ATCC 25196 / NCIMB 11849 / C 71) protein is ATP synthase subunit beta 1.